The chain runs to 364 residues: Aminomethyltransferase (364 aa).

It belongs to the GcvT family. In terms of assembly, the glycine cleavage system is composed of four proteins: P, T, L and H.

The catalysed reaction is N(6)-[(R)-S(8)-aminomethyldihydrolipoyl]-L-lysyl-[protein] + (6S)-5,6,7,8-tetrahydrofolate = N(6)-[(R)-dihydrolipoyl]-L-lysyl-[protein] + (6R)-5,10-methylene-5,6,7,8-tetrahydrofolate + NH4(+). Its function is as follows. The glycine cleavage system catalyzes the degradation of glycine. This chain is Aminomethyltransferase, found in Anoxybacillus flavithermus (strain DSM 21510 / WK1).